The following is an 809-amino-acid chain: Bifunctional enzyme MurC/Ddl (809 aa).

The segment at 1–450 (MKGTPQYHFI…GEALKDFNPK (450 aa)) is UDP-N-acetylmuramate--alanine ligase. Residues 111 to 117 (GSHGKTG) and 606 to 661 (IETF…SREI) each bind ATP. Positions 451–809 (KLSIGLVCGG…FTKEQDLVKR (359 aa)) are D-alanine--D-alanine ligase. In terms of domain architecture, ATP-grasp spans 573–784 (KRIASAVGVP…QEQIVDHFII (212 aa)). Mg(2+)-binding residues include aspartate 738, glutamate 751, and asparagine 753.

In the N-terminal section; belongs to the MurCDEF family. It in the C-terminal section; belongs to the D-alanine--D-alanine ligase family. Mg(2+) serves as cofactor. The cofactor is Mn(2+).

The protein localises to the cytoplasm. It catalyses the reaction UDP-N-acetyl-alpha-D-muramate + L-alanine + ATP = UDP-N-acetyl-alpha-D-muramoyl-L-alanine + ADP + phosphate + H(+). The catalysed reaction is 2 D-alanine + ATP = D-alanyl-D-alanine + ADP + phosphate + H(+). Its pathway is cell wall biogenesis; peptidoglycan biosynthesis. Cell wall formation. The polypeptide is Bifunctional enzyme MurC/Ddl (murC/ddl) (Chlamydia pneumoniae (Chlamydophila pneumoniae)).